Consider the following 448-residue polypeptide: UDP-N-acetylmuramoylalanine--D-glutamate ligase (448 aa).

ATP is bound at residue 112–118; that stretch reads GSNAKST.

This sequence belongs to the MurCDEF family.

It is found in the cytoplasm. It carries out the reaction UDP-N-acetyl-alpha-D-muramoyl-L-alanine + D-glutamate + ATP = UDP-N-acetyl-alpha-D-muramoyl-L-alanyl-D-glutamate + ADP + phosphate + H(+). The protein operates within cell wall biogenesis; peptidoglycan biosynthesis. Cell wall formation. Catalyzes the addition of glutamate to the nucleotide precursor UDP-N-acetylmuramoyl-L-alanine (UMA). The protein is UDP-N-acetylmuramoylalanine--D-glutamate ligase of Acinetobacter baumannii (strain ATCC 17978 / DSM 105126 / CIP 53.77 / LMG 1025 / NCDC KC755 / 5377).